Consider the following 634-residue polypeptide: Chaperone protein HtpG (634 aa).

Positions 1-342 are a; substrate-binding; that stretch reads MTVETQKETL…SNDLSLNVSR (342 aa). The interval 343–559 is b; sequence EILQKDPIID…EQDLGLQMRQ (217 aa). A c region spans residues 560–634; the sequence is ILEASGQKVP…LNKLLVELSA (75 aa).

Belongs to the heat shock protein 90 family. Homodimer.

The protein localises to the cytoplasm. Functionally, molecular chaperone. Has ATPase activity. This is Chaperone protein HtpG from Pseudomonas putida (strain ATCC 47054 / DSM 6125 / CFBP 8728 / NCIMB 11950 / KT2440).